The chain runs to 256 residues: MIEAARKAARGLARDFGEVTELQVSKKGAADFVTNADIKAEQTLFELLTKARPGYGFLGEERGMVEGTDKTHTWIVDPLDGTTNFMHAIPHFAVNIALQREGEGIVAGVTYNPITNDLFWVEKGKGAFLGAEKRLRVAARRHLDEAILATGVPFAGKPGHGQFLKELHQVSQKVAGVRRFGAASLDLAWVAAGRFDAFWERNLNSWDVAAGVLMIQESGGKITTIDESDHDVVQGKSILASNQDLHPQILERLRAA.

The Mg(2+) site is built by Glu60, Asp77, Leu79, and Asp80. Substrate is bound at residue Glu60. Substrate-binding positions include 79–82 (LDGT), Arg178, and Asp207. Asp207 contacts Mg(2+).

It belongs to the inositol monophosphatase superfamily. Requires Mg(2+) as cofactor.

The catalysed reaction is a myo-inositol phosphate + H2O = myo-inositol + phosphate. This is Inositol-1-monophosphatase (suhB) from Caulobacter vibrioides (strain ATCC 19089 / CIP 103742 / CB 15) (Caulobacter crescentus).